The sequence spans 130 residues: Keratin-associated protein 12-1 (130 aa).

Tandem repeats lie at residues 10–14, 15–29, 34–38, 40–44, 45–49, 60–64, 85–89, 90–94, 95–99, 104–108, 109–113, 114–118, 119–123, and 124–128. Residues 10–128 form a 14 X 5 AA approximate repeats region; that stretch reads CQPSCCVSSS…CKPVTCSNPS (119 aa).

The protein belongs to the KRTAP type 12 family. Interacts with hair keratins. As to expression, expressed only in the head and back skin of a 3 day old mouse. Not expressed in adult skin.

Functionally, in the hair cortex, hair keratin intermediate filaments are embedded in an interfilamentous matrix, consisting of hair keratin-associated proteins (KRTAP), which are essential for the formation of a rigid and resistant hair shaft through their extensive disulfide bond cross-linking with abundant cysteine residues of hair keratins. The matrix proteins include the high-sulfur and high-glycine-tyrosine keratins. This chain is Keratin-associated protein 12-1, found in Mus musculus (Mouse).